The primary structure comprises 435 residues: Amidase 1 (435 aa).

Active-site charge relay system residues include Lys38 and Ser115. Ser139 (acyl-ester intermediate) is an active-site residue.

The protein belongs to the amidase family.

It localises to the cytoplasm. It is found in the nucleus. Its subcellular location is the nucleoplasm. It carries out the reaction a monocarboxylic acid amide + H2O = a monocarboxylate + NH4(+). Its function is as follows. Amidase involved in auxin biosynthesis. Converts indole-3-acetamide (IAM) to indole-3-acetate, and phenyl-2-acetamide (PAM) to phenyl-2-acetate. Substrate preference is PAM &gt; IAM. This chain is Amidase 1, found in Oryza sativa subsp. japonica (Rice).